We begin with the raw amino-acid sequence, 122 residues long: MIQMQSLLKVADNTGARTVMCIKVLGGSKRRFAGIGDVIKVAVKDAAPRGRIKKGEVYNAVIVRTAKGIRRSDGSLVKFDTNAAVILNNKLEPIGTRIFGPVTRELRTAKFMKIVSLAPEVI.

This sequence belongs to the universal ribosomal protein uL14 family. Part of the 50S ribosomal subunit. Forms a cluster with proteins L3 and L19. In the 70S ribosome, L14 and L19 interact and together make contacts with the 16S rRNA in bridges B5 and B8.

Functionally, binds to 23S rRNA. Forms part of two intersubunit bridges in the 70S ribosome. The protein is Large ribosomal subunit protein uL14 of Nitrosomonas eutropha (strain DSM 101675 / C91 / Nm57).